The sequence spans 113 residues: Small ribosomal subunit protein bS16 (113 aa).

Positions proline 84–alanine 113 are disordered.

This sequence belongs to the bacterial ribosomal protein bS16 family.

The polypeptide is Small ribosomal subunit protein bS16 (Gluconacetobacter diazotrophicus (strain ATCC 49037 / DSM 5601 / CCUG 37298 / CIP 103539 / LMG 7603 / PAl5)).